The sequence spans 771 residues: Endoplasmin homolog (771 aa).

An N-terminal signal peptide occupies residues 1-24 (MANSSLLRVVLVALLLLGSVTVSA). ATP is bound by residues Asn-63, Asp-109, and Phe-160. Residue Asn-63 is glycosylated (N-linked (GlcNAc...) asparagine). A disordered region spans residues 253–282 (TAATPEPAAEEGSLDEGAVEEDPDKEGDTQ). A compositionally biased stretch (acidic residues) spans 260-277 (AAEEGSLDEGAVEEDPDK). N-linked (GlcNAc...) asparagine glycans are attached at residues Asn-306 and Asn-402. The disordered stretch occupies residues 727–771 (ADDSLLPPDDAEYTVSDTEAEEEEEQPKVDANADEEAEAVGEDDL). Residues 758–771 (NADEEAEAVGEDDL) are compositionally biased toward acidic residues. Positions 768 to 771 (EDDL) match the Prevents secretion from ER motif.

It belongs to the heat shock protein 90 family. Homotetramer.

It is found in the endoplasmic reticulum. In terms of biological role, molecular chaperone that functions in the processing and transport of secreted proteins. Required for the synthesis of lipophosphoglycan (LPG), a cell surface glycoconjugate. Necessary for the attachment of the galactosyl residue to the mannose within the phosphoglycan repeats of the nascent LPG chain. Also required for addition of phosphoglycan to acid phosphatase. Not required for normal growth. Has ATPase activity. Binds heparin with micromolar affinity which may facilitate infection of host cells. The chain is Endoplasmin homolog from Leishmania infantum.